A 238-amino-acid polypeptide reads, in one-letter code: Dolichyldiphosphatase 1 (238 aa).

4 helical membrane passes run 33–53, 100–120, 130–150, and 162–182; these read LAYLSLSPVFVIVGFVTLIIF, PSSHSQFMWFFSVYSFLFLYL, FLDLLWRHVLSLGLLAVAFLV, and WSQVLYGGIAGGLMAIAWFIF.

The protein belongs to the dolichyldiphosphatase family.

It localises to the endoplasmic reticulum membrane. The catalysed reaction is a di-trans,poly-cis-dolichyl diphosphate + H2O = a di-trans,poly-cis-dolichyl phosphate + phosphate + H(+). It participates in protein modification; protein glycosylation. Required for efficient N-glycosylation. Necessary for maintaining optimal levels of dolichol-linked oligosaccharides. Hydrolyzes dolichyl pyrophosphate at a very high rate and dolichyl monophosphate at a much lower rate. Does not act on phosphatidate. The polypeptide is Dolichyldiphosphatase 1 (DOLPP1) (Homo sapiens (Human)).